The primary structure comprises 232 residues: Caffeoyl-CoA O-methyltransferase (232 aa).

Lysine 6 contributes to the substrate binding site. Residues threonine 48, glutamate 70, 72 to 73, serine 78, aspartate 96, and alanine 125 contribute to the S-adenosyl-L-methionine site; that span reads GV. Aspartate 148 contacts substrate. Aspartate 148 is an a divalent metal cation binding site. Aspartate 150 lines the S-adenosyl-L-methionine pocket. The a divalent metal cation site is built by aspartate 174 and asparagine 175. Asparagine 179 contributes to the substrate binding site.

This sequence belongs to the class I-like SAM-binding methyltransferase superfamily. Cation-dependent O-methyltransferase family. CCoAMT subfamily. It depends on a divalent metal cation as a cofactor.

It catalyses the reaction (E)-caffeoyl-CoA + S-adenosyl-L-methionine = (E)-feruloyl-CoA + S-adenosyl-L-homocysteine + H(+). It functions in the pathway aromatic compound metabolism; phenylpropanoid biosynthesis. In terms of biological role, methylates caffeoyl-CoA to feruloyl-CoA and 5-hydroxyferuloyl-CoA to sinapoyl-CoA. Plays a role in the synthesis of feruloylated polysaccharides. Involved in the reinforcement of the plant cell wall. Also involved in the responding to wounding or pathogen challenge by the increased formation of cell wall-bound ferulic acid polymers. The chain is Caffeoyl-CoA O-methyltransferase from Citrus natsudaidai (Natsudaidai orange).